The primary structure comprises 524 residues: Lysine--tRNA ligase (524 aa).

Positions 433 and 440 each coordinate Mg(2+).

Belongs to the class-II aminoacyl-tRNA synthetase family. As to quaternary structure, homodimer. Mg(2+) serves as cofactor.

The protein localises to the cytoplasm. The catalysed reaction is tRNA(Lys) + L-lysine + ATP = L-lysyl-tRNA(Lys) + AMP + diphosphate. The protein is Lysine--tRNA ligase of Colwellia psychrerythraea (strain 34H / ATCC BAA-681) (Vibrio psychroerythus).